We begin with the raw amino-acid sequence, 605 residues long: Solute carrier family 23 member 1 (605 aa).

Positions 1-30 are disordered; that stretch reads MKTPEDPGSPKQHEVVDSAGTSTRDRQAPL. The Cytoplasmic segment spans residues 1 to 59; it reads MKTPEDPGSPKQHEVVDSAGTSTRDRQAPLPTEPKFDMLYKIEDVPPWYLCILLGFQHY. Residues 60-80 traverse the membrane as a helical segment; the sequence is LTCFSGTIAVPFLLAEALCVG. At 81–88 the chain is on the extracellular side; it reads RDQHMVSQ. A helical membrane pass occupies residues 89 to 109; the sequence is LIGTIFTCVGITTLIQTTVGI. Residue arginine 110 is a topological domain, cytoplasmic. Residues 111-131 traverse the membrane as a helical segment; the sequence is LPLFQASAFAFLVPAKSILAL. Over 132 to 166 the chain is Extracellular; that stretch reads ERWKCPSEEEIYGNWSMPLNTSHIWHPRIREVQGA. Residues asparagine 145 and asparagine 151 are each glycosylated (N-linked (GlcNAc...) asparagine). A helical transmembrane segment spans residues 167-187; that stretch reads IMVSSMVEVVIGLMGLPGALL. Residues 188 to 214 lie on the Cytoplasmic side of the membrane; sequence SYIGPLTVTPTVSLIGLSVFQAAGDRA. The chain crosses the membrane as a helical span at residues 215 to 232; it reads GSHWGISACSILLIVLFS. At 233 to 236 the chain is on the extracellular side; sequence QYLR. An intramembrane region (helical) is located at residues 237-250; it reads NLTFLLPVYRWGKG. At 251-257 the chain is on the extracellular side; the sequence is LTLFRVQ. A helical membrane pass occupies residues 258-278; sequence IFKMFPIVLAIMTVWLLCYVL. The Cytoplasmic segment spans residues 279–319; sequence TLTDVLPADPTVYGFQARTDARGDIMAISPWIRIPYPCQWG. The chain crosses the membrane as a helical span at residues 320-340; sequence LPTVTVAAVLGMFSATLAGII. Over 341–365 the chain is Extracellular; that stretch reads ESIGDYYACARLAGAPPPPVHAINR. A helical membrane pass occupies residues 366–386; the sequence is GIFTEGICCIIAGLLGTGNGS. At 387–409 the chain is on the cytoplasmic side; the sequence is TSSSPNIGVLGITKVGSRRVVQY. A helical membrane pass occupies residues 410–430; sequence GAGIMLILGAIGKFTALFASL. Topologically, residues 431–433 are extracellular; it reads PDP. The chain crosses the membrane as a helical span at residues 434-454; that stretch reads ILGGMFCTLFGMITAVGLSNL. The Cytoplasmic portion of the chain corresponds to 455-464; the sequence is QFVDMNSSRN. The helical transmembrane segment at 465-485 threads the bilayer; it reads LFVLGFSMFFGLTLPNYLDSN. Residues 486–497 are Extracellular-facing; that stretch reads PGAINTGIPEVD. A helical membrane pass occupies residues 498–518; that stretch reads QILTVLLTTEMFVGGCLAFIL. Over 519 to 605 the chain is Cytoplasmic; it reads DNTVPGSPEE…IETGSVCTKV (87 aa). Threonine 598 carries the phosphothreonine modification. Serine 600 carries the post-translational modification Phosphoserine. Threonine 603 carries the phosphothreonine modification.

Belongs to the nucleobase:cation symporter-2 (NCS2) (TC 2.A.40) family. In terms of processing, phosphorylated. Expressed in kidney (at protein level).

The protein resides in the cell membrane. The enzyme catalyses L-ascorbate(out) + 2 Na(+)(out) = L-ascorbate(in) + 2 Na(+)(in). The catalysed reaction is urate(out) + 2 Na(+)(out) = urate(in) + 2 Na(+)(in). Its function is as follows. Sodium:L-ascorbate cotransporter. Mediates electrogenic uptake of vitamin C, with a stoichiometry of 2 Na(+) for each L-ascorbate. Has retained some ancestral activity toward nucleobases such as urate, an oxidized purine. Low-affinity high-capacity sodium:urate cotransporter, may regulate serum urate levels by serving as a renal urate re-absorber. This chain is Solute carrier family 23 member 1 (Slc23a1), found in Mus musculus (Mouse).